The primary structure comprises 166 residues: Putative methyltransferase Rv1506c (166 aa).

Belongs to the methyltransferase superfamily.

Its function is as follows. Probably plays a role in host phagosome maturation arrest, as well as a role in the synthesis of acyltrehalose-containing glycolipids. The polypeptide is Putative methyltransferase Rv1506c (Mycobacterium tuberculosis (strain ATCC 25618 / H37Rv)).